We begin with the raw amino-acid sequence, 341 residues long: Phosphoribosylformylglycinamidine cyclo-ligase (341 aa).

The protein belongs to the AIR synthase family.

It localises to the cytoplasm. It catalyses the reaction 2-formamido-N(1)-(5-O-phospho-beta-D-ribosyl)acetamidine + ATP = 5-amino-1-(5-phospho-beta-D-ribosyl)imidazole + ADP + phosphate + H(+). It functions in the pathway purine metabolism; IMP biosynthesis via de novo pathway; 5-amino-1-(5-phospho-D-ribosyl)imidazole from N(2)-formyl-N(1)-(5-phospho-D-ribosyl)glycinamide: step 2/2. The sequence is that of Phosphoribosylformylglycinamidine cyclo-ligase from Xanthomonas campestris pv. campestris (strain 8004).